The primary structure comprises 254 residues: 3-dehydroquinate dehydratase (254 aa).

3-dehydroquinate is bound by residues 47-49 and Arg-83; that span reads EFR. Residue His-144 is the Proton donor/acceptor of the active site. Catalysis depends on Lys-171, which acts as the Schiff-base intermediate with substrate. 3 residues coordinate 3-dehydroquinate: Arg-213, Ser-232, and Gln-236.

The protein belongs to the type-I 3-dehydroquinase family. Homodimer.

It catalyses the reaction 3-dehydroquinate = 3-dehydroshikimate + H2O. It functions in the pathway metabolic intermediate biosynthesis; chorismate biosynthesis; chorismate from D-erythrose 4-phosphate and phosphoenolpyruvate: step 3/7. Functionally, involved in the third step of the chorismate pathway, which leads to the biosynthesis of aromatic amino acids. Catalyzes the cis-dehydration of 3-dehydroquinate (DHQ) and introduces the first double bond of the aromatic ring to yield 3-dehydroshikimate. The polypeptide is 3-dehydroquinate dehydratase (Neisseria meningitidis serogroup C / serotype 2a (strain ATCC 700532 / DSM 15464 / FAM18)).